We begin with the raw amino-acid sequence, 898 residues long: Coiled-coil domain-containing protein 186 (898 aa).

3 disordered regions span residues 1–43 (MSET…NESK), 68–95 (NYIPDHGGGEDSCAKTDTGSENSEQIAN), and 702–749 (RRKL…SSVA). Serine 2 bears the N-acetylserine mark. The span at 82-95 (KTDTGSENSEQIAN) shows a compositional bias: polar residues. Residues 201–712 (KYLQQEHIIK…RKLDQVESGS (512 aa)) adopt a coiled-coil conformation. A compositionally biased stretch (basic and acidic residues) spans 703–717 (RKLDQVESGSYDKEV). The segment covering 718–734 (SSMGSRSSSSGSLNARS) has biased composition (low complexity). Residue serine 740 is modified to Phosphoserine. Coiled coils occupy residues 759-803 (AMLI…IQSY) and 855-894 (KLQAVLEDTLLKNITLKENLQTLGTEIERLIKHQHELEQR).

In Homo sapiens (Human), this protein is Coiled-coil domain-containing protein 186 (CCDC186).